The sequence spans 522 residues: ATP synthase subunit alpha (522 aa).

An ATP-binding site is contributed by 176–183; it reads GDRQTGKT.

It belongs to the ATPase alpha/beta chains family. As to quaternary structure, F-type ATPases have 2 components, CF(1) - the catalytic core - and CF(0) - the membrane proton channel. CF(1) has five subunits: alpha(3), beta(3), gamma(1), delta(1), epsilon(1). CF(0) has four main subunits: a, b, b' and c.

The protein localises to the cell membrane. The enzyme catalyses ATP + H2O + 4 H(+)(in) = ADP + phosphate + 5 H(+)(out). In terms of biological role, produces ATP from ADP in the presence of a proton gradient across the membrane. The alpha chain is a regulatory subunit. The chain is ATP synthase subunit alpha from Chloroflexus aggregans (strain MD-66 / DSM 9485).